The primary structure comprises 75 residues: Ribonuclease pancreatic (75 aa).

2 disulfides stabilise this stretch: Cys7–Cys65 and Cys46–Cys53. Asn15 carries N-linked (GlcNAc...) asparagine glycosylation. Substrate contacts are provided by residues 22 to 26, Lys47, and Arg66; that span reads KPVNT.

It belongs to the pancreatic ribonuclease family. As to quaternary structure, monomer. Interacts with and forms tight 1:1 complexes with RNH1. Dimerization of two such complexes may occur. Interaction with RNH1 inhibits this protein. In terms of tissue distribution, pancreas.

The protein resides in the secreted. It carries out the reaction an [RNA] containing cytidine + H2O = an [RNA]-3'-cytidine-3'-phosphate + a 5'-hydroxy-ribonucleotide-3'-[RNA].. The enzyme catalyses an [RNA] containing uridine + H2O = an [RNA]-3'-uridine-3'-phosphate + a 5'-hydroxy-ribonucleotide-3'-[RNA].. Functionally, endonuclease that catalyzes the cleavage of RNA on the 3' side of pyrimidine nucleotides. Acts on single-stranded and double-stranded RNA. This Oryx leucoryx (Arabian oryx) protein is Ribonuclease pancreatic (rnase1).